The sequence spans 322 residues: Probable heme-iron transport system permease protein IsdF (322 aa).

9 consecutive transmembrane segments (helical) span residues 9–29 (LLFLCLLVILIATAYISFVTG), 61–81 (ILIALMVGAMLAVSGALLQAA), 89–109 (ANIIGVSSGALIMRALCMLFI), 114–134 (FYLPLLSFIGGLIPFLIIILL), 143–163 (VSMILVGVALFVLLNGVLEIL), 179–199 (IWSDVYILAVSALLGLILTLL), 233–253 (VFLASATVAIVGQLAFLGIIV), 267–287 (VLIPFSTVIGAWLLLVADLLG), and 294–314 (LEIPANAILMIVGGPMLIYLI).

It belongs to the binding-protein-dependent transport system permease family. FecCD subfamily.

It is found in the cell membrane. Functionally, part of the binding-protein-dependent transport system for heme-iron. Responsible for the translocation of the substrate across the membrane. In Staphylococcus aureus (strain MSSA476), this protein is Probable heme-iron transport system permease protein IsdF (isdF).